We begin with the raw amino-acid sequence, 463 residues long: L-seryl-tRNA(Sec) selenium transferase (463 aa).

Position 295 is an N6-(pyridoxal phosphate)lysine (Lys295).

It belongs to the SelA family. Homodecamer; pentamer of dimers. Binds only one seryl-tRNA(Sec) per dimer. The cofactor is pyridoxal 5'-phosphate.

Its subcellular location is the cytoplasm. The enzyme catalyses L-seryl-tRNA(Sec) + selenophosphate + H(+) = L-selenocysteinyl-tRNA(Sec) + phosphate. Its pathway is aminoacyl-tRNA biosynthesis; selenocysteinyl-tRNA(Sec) biosynthesis; selenocysteinyl-tRNA(Sec) from L-seryl-tRNA(Sec) (bacterial route): step 1/1. Its function is as follows. Converts seryl-tRNA(Sec) to selenocysteinyl-tRNA(Sec) required for selenoprotein biosynthesis. The polypeptide is L-seryl-tRNA(Sec) selenium transferase (Escherichia fergusonii (strain ATCC 35469 / DSM 13698 / CCUG 18766 / IAM 14443 / JCM 21226 / LMG 7866 / NBRC 102419 / NCTC 12128 / CDC 0568-73)).